A 320-amino-acid polypeptide reads, in one-letter code: ATP-dependent 6-phosphofructokinase (320 aa).

Glycine 12 is a binding site for ATP. ADP contacts are provided by residues arginine 22–arginine 26 and arginine 55–aspartate 60. Residues arginine 73–phenylalanine 74 and glycine 103–serine 106 each bind ATP. Aspartate 104 contributes to the Mg(2+) binding site. Residue threonine 126–aspartate 128 participates in substrate binding. The Proton acceptor role is filled by aspartate 128. Arginine 155 contacts ADP. Substrate-binding positions include arginine 163 and methionine 170–arginine 172. Residues glycine 186 to glutamate 188, lysine 212, and lysine 214 to histidine 216 contribute to the ADP site. Residues glutamate 223, arginine 244, and histidine 250 to arginine 253 each bind substrate.

The protein belongs to the phosphofructokinase type A (PFKA) family. ATP-dependent PFK group I subfamily. Prokaryotic clade 'B1' sub-subfamily. As to quaternary structure, homotetramer. The cofactor is Mg(2+).

The protein localises to the cytoplasm. It catalyses the reaction beta-D-fructose 6-phosphate + ATP = beta-D-fructose 1,6-bisphosphate + ADP + H(+). The protein operates within carbohydrate degradation; glycolysis; D-glyceraldehyde 3-phosphate and glycerone phosphate from D-glucose: step 3/4. With respect to regulation, allosterically activated by ADP and other diphosphonucleosides, and allosterically inhibited by phosphoenolpyruvate. Its function is as follows. Catalyzes the phosphorylation of D-fructose 6-phosphate to fructose 1,6-bisphosphate by ATP, the first committing step of glycolysis. In Buchnera aphidicola subsp. Acyrthosiphon pisum (strain 5A), this protein is ATP-dependent 6-phosphofructokinase.